The sequence spans 286 residues: Bifunctional protein FolD (286 aa).

Residues Gly-165–Ser-167 and Ser-190 contribute to the NADP(+) site.

This sequence belongs to the tetrahydrofolate dehydrogenase/cyclohydrolase family. In terms of assembly, homodimer.

It catalyses the reaction (6R)-5,10-methylene-5,6,7,8-tetrahydrofolate + NADP(+) = (6R)-5,10-methenyltetrahydrofolate + NADPH. The enzyme catalyses (6R)-5,10-methenyltetrahydrofolate + H2O = (6R)-10-formyltetrahydrofolate + H(+). The protein operates within one-carbon metabolism; tetrahydrofolate interconversion. In terms of biological role, catalyzes the oxidation of 5,10-methylenetetrahydrofolate to 5,10-methenyltetrahydrofolate and then the hydrolysis of 5,10-methenyltetrahydrofolate to 10-formyltetrahydrofolate. In Paraburkholderia xenovorans (strain LB400), this protein is Bifunctional protein FolD.